A 1135-amino-acid chain; its full sequence is Protocadherin-18 (1135 aa).

The N-terminal stretch at 1 to 27 (MHQMNAKMHFRFVFALLIVSFNHDVLG) is a signal peptide. 6 Cadherin domains span residues 28–137 (KNLK…SPQF), 138–246 (SRSL…SPAF), 247–354 (EQQS…KPEI), 361–465 (PGKE…PPHF), 466–576 (QRSR…VPVV), and 582–688 (RNNT…STAM). Residues 28-699 (KNLKYRIYEE…SVSQASLDVS (672 aa)) are Extracellular-facing. N-linked (GlcNAc...) asparagine glycosylation occurs at asparagine 103. N-linked (GlcNAc...) asparagine glycans are attached at residues asparagine 269, asparagine 420, asparagine 559, asparagine 583, and asparagine 641. A helical membrane pass occupies residues 700–720 (MIIIISLGAICAVLLVIMVLF). At 721–1135 (ATRCNREKKD…NKLLQDVRQS (415 aa)) the chain is on the cytoplasmic side. Disordered regions lie at residues 769-800 (LPIR…NSHQ), 869-889 (SLKD…DLGR), 942-1003 (DYRS…STSS), and 1023-1046 (YSEC…PAKT). Polar residues predominate over residues 791–800 (GSRQSHNSHQ). Residues 869–878 (SLKDSGRGDS) show a composition bias toward basic and acidic residues. The tract at residues 893–1135 (IDRLLGEGFS…NKLLQDVRQS (243 aa)) is interaction with DAB1. The segment covering 1028-1039 (EVDRSNSLERRK) has biased composition (basic and acidic residues).

Interacts with DAB1. In terms of tissue distribution, expressed in all tissues, with highest expression in lung and ovary.

The protein resides in the cell membrane. Functionally, potential calcium-dependent cell-adhesion protein. This chain is Protocadherin-18 (PCDH18), found in Homo sapiens (Human).